Consider the following 42-residue polypeptide: Photosystem II reaction center protein J (42 aa).

The chain crosses the membrane as a helical span at residues 12–32 (LWFVGMIVGLAALGLLGIFFY).

It belongs to the PsbJ family. PSII is composed of 1 copy each of membrane proteins PsbA, PsbB, PsbC, PsbD, PsbE, PsbF, PsbH, PsbI, PsbJ, PsbK, PsbL, PsbM, PsbT, PsbX, PsbY, PsbZ, Psb30/Ycf12, at least 3 peripheral proteins of the oxygen-evolving complex and a large number of cofactors. It forms dimeric complexes.

The protein resides in the plastid. It localises to the chloroplast thylakoid membrane. Functionally, one of the components of the core complex of photosystem II (PSII). PSII is a light-driven water:plastoquinone oxidoreductase that uses light energy to abstract electrons from H(2)O, generating O(2) and a proton gradient subsequently used for ATP formation. It consists of a core antenna complex that captures photons, and an electron transfer chain that converts photonic excitation into a charge separation. In Nephroselmis olivacea (Green alga), this protein is Photosystem II reaction center protein J.